A 239-amino-acid chain; its full sequence is MINDVISPEFDENGRAMRRIRSFVRRQGRLTKGQQLALDNYWPVMGVEYQPTPVDFTALFGREAPVVLEIGFGMGTSLVTMAASNPQQNFLGIEVHSPGVGACLASAHEAGLNNLRVMCHDAVEVLENMIPDSSLDMVQLFFPDPWHKARHNKRRIVQAPFVELVKSKLKVGGVFHMATDWQHYAEHMLEVMSGANGYRNLSEQNDYVPRPDSRPLTKFELRGQRLGHGVWDLMFERKE.

Positions 69, 94, 121, and 144 each coordinate S-adenosyl-L-methionine. Aspartate 144 is an active-site residue. Substrate is bound at residue lysine 148. The interval arginine 150–arginine 155 is interaction with RNA. Substrate is bound by residues aspartate 180 and threonine 217–glutamate 220.

It belongs to the class I-like SAM-binding methyltransferase superfamily. TrmB family. Monomer.

The enzyme catalyses guanosine(46) in tRNA + S-adenosyl-L-methionine = N(7)-methylguanosine(46) in tRNA + S-adenosyl-L-homocysteine. Its pathway is tRNA modification; N(7)-methylguanine-tRNA biosynthesis. In terms of biological role, catalyzes the formation of N(7)-methylguanine at position 46 (m7G46) in tRNA. The protein is tRNA (guanine-N(7)-)-methyltransferase of Yersinia enterocolitica serotype O:8 / biotype 1B (strain NCTC 13174 / 8081).